A 75-amino-acid polypeptide reads, in one-letter code: DNA-directed RNA polymerase subunit omega (75 aa).

This sequence belongs to the RNA polymerase subunit omega family. In terms of assembly, the RNAP catalytic core consists of 2 alpha, 1 beta, 1 beta' and 1 omega subunit. When a sigma factor is associated with the core the holoenzyme is formed, which can initiate transcription.

It catalyses the reaction RNA(n) + a ribonucleoside 5'-triphosphate = RNA(n+1) + diphosphate. Its function is as follows. Promotes RNA polymerase assembly. Latches the N- and C-terminal regions of the beta' subunit thereby facilitating its interaction with the beta and alpha subunits. The chain is DNA-directed RNA polymerase subunit omega from Nitratidesulfovibrio vulgaris (strain DSM 19637 / Miyazaki F) (Desulfovibrio vulgaris).